Consider the following 136-residue polypeptide: Mite allergen Der f 21.0101 (136 aa).

A signal peptide spans 1–17 (MKFIIFCAIVMAVSVSG).

Belongs to the mite group 5 allergen family. As to quaternary structure, monomer. Homodimer. In terms of tissue distribution, highly expressed in foregut (stomach), midgut and hindgut. Not expressed in body wall, reproductive system or body cavity.

The sequence is that of Mite allergen Der f 21.0101 from Dermatophagoides farinae (American house dust mite).